Here is a 284-residue protein sequence, read N- to C-terminus: Bifunctional protein FolD 2 (284 aa).

Residues glycine 165–glycine 167, threonine 192, and valine 233 contribute to the NADP(+) site.

It belongs to the tetrahydrofolate dehydrogenase/cyclohydrolase family. In terms of assembly, homodimer.

It carries out the reaction (6R)-5,10-methylene-5,6,7,8-tetrahydrofolate + NADP(+) = (6R)-5,10-methenyltetrahydrofolate + NADPH. It catalyses the reaction (6R)-5,10-methenyltetrahydrofolate + H2O = (6R)-10-formyltetrahydrofolate + H(+). Its pathway is one-carbon metabolism; tetrahydrofolate interconversion. Functionally, catalyzes the oxidation of 5,10-methylenetetrahydrofolate to 5,10-methenyltetrahydrofolate and then the hydrolysis of 5,10-methenyltetrahydrofolate to 10-formyltetrahydrofolate. The protein is Bifunctional protein FolD 2 of Streptomyces avermitilis (strain ATCC 31267 / DSM 46492 / JCM 5070 / NBRC 14893 / NCIMB 12804 / NRRL 8165 / MA-4680).